The chain runs to 711 residues: Cyclomaltodextrin glucanotransferase (711 aa).

An N-terminal signal peptide occupies residues 1–31; sequence MRRWLSLVLSMSFVFSAIFIVSDTQKVTVEA. The segment at 32–165 is A1; the sequence is AGNLNKVNFT…GIKVIIDFAP (134 aa). Ca(2+)-binding residues include D55, N57, N60, and N61. A disulfide bond links C71 and C78. Ca(2+) is bound by residues G79 and D81. Residue 127 to 128 participates in substrate binding; it reads YW. N166 is a Ca(2+) binding site. The segment at 166–229 is b; that stretch reads NHTSPASETN…NLFDLADLNH (64 aa). H167 is a binding site for substrate. I217 contacts Ca(2+). 220–223 contributes to the substrate binding site; the sequence is NLFD. D226 lines the Ca(2+) pocket. An A2 region spans residues 230-433; that stretch reads QNPVIDRYLK…LRRNNPALAY (204 aa). Residue R254 participates in substrate binding. D256 (nucleophile) is an active-site residue. A substrate-binding site is contributed by 259-260; that stretch reads KH. H260 lines the Ca(2+) pocket. Catalysis depends on E284, which acts as the Proton donor. The substrate site is built by H354, D398, and R402. The c stretch occupies residues 434–522; that stretch reads GDTEQRWING…EVGVWAYSAT (89 aa). Positions 523-606 are d; it reads ESTPIIGHVG…SAAYDNFEVL (84 aa). The 79-residue stretch at 526–604 folds into the IPT/TIG domain; sequence PIIGHVGPMM…QTSAAYDNFE (79 aa). The CBM20 domain maps to 605–711; the sequence is VLTNDQVSVR…TGKIIVDWQN (107 aa). The e stretch occupies residues 607 to 711; the sequence is TNDQVSVRFV…TGKIIVDWQN (105 aa).

Belongs to the glycosyl hydrolase 13 family. As to quaternary structure, monomer. The cofactor is Ca(2+).

The protein resides in the secreted. The enzyme catalyses Cyclizes part of a (1-&gt;4)-alpha-D-glucan chain by formation of a (1-&gt;4)-alpha-D-glucosidic bond.. The polypeptide is Cyclomaltodextrin glucanotransferase (cgt) (Geobacillus stearothermophilus (Bacillus stearothermophilus)).